We begin with the raw amino-acid sequence, 511 residues long: ATP synthase subunit alpha 2 (511 aa).

An ATP-binding site is contributed by 173–180; the sequence is GDRQTGKS.

Belongs to the ATPase alpha/beta chains family. As to quaternary structure, F-type ATPases have 2 components, CF(1) - the catalytic core - and CF(0) - the membrane proton channel. CF(1) has five subunits: alpha(3), beta(3), gamma(1), delta(1), epsilon(1). CF(0) has three main subunits: a(1), b(2) and c(9-12). The alpha and beta chains form an alternating ring which encloses part of the gamma chain. CF(1) is attached to CF(0) by a central stalk formed by the gamma and epsilon chains, while a peripheral stalk is formed by the delta and b chains.

It is found in the cell inner membrane. The catalysed reaction is ATP + H2O + 4 H(+)(in) = ADP + phosphate + 5 H(+)(out). In terms of biological role, produces ATP from ADP in the presence of a proton gradient across the membrane. The alpha chain is a regulatory subunit. The sequence is that of ATP synthase subunit alpha 2 from Nitrosospira multiformis (strain ATCC 25196 / NCIMB 11849 / C 71).